A 75-amino-acid polypeptide reads, in one-letter code: Putative defensin-like protein 55 (75 aa).

The first 19 residues, 1–19 (MNITKAYVIFFLVVILTNS), serve as a signal peptide directing secretion. Intrachain disulfides connect Cys39/Cys73, Cys43/Cys66, Cys52/Cys71, and Cys56/Cys72.

Belongs to the DEFL family.

The protein resides in the secreted. This chain is Putative defensin-like protein 55, found in Arabidopsis thaliana (Mouse-ear cress).